Here is a 37-residue protein sequence, read N- to C-terminus: Large ribosomal subunit protein bL36c (37 aa).

This sequence belongs to the bacterial ribosomal protein bL36 family.

Its subcellular location is the plastid. In Helicosporidium sp. subsp. Simulium jonesii (Green alga), this protein is Large ribosomal subunit protein bL36c.